The chain runs to 301 residues: ATP synthase gamma chain (301 aa).

The protein belongs to the ATPase gamma chain family. In terms of assembly, F-type ATPases have 2 components, CF(1) - the catalytic core - and CF(0) - the membrane proton channel. CF(1) has five subunits: alpha(3), beta(3), gamma(1), delta(1), epsilon(1). CF(0) has three main subunits: a, b and c.

It localises to the cell inner membrane. Its function is as follows. Produces ATP from ADP in the presence of a proton gradient across the membrane. The gamma chain is believed to be important in regulating ATPase activity and the flow of protons through the CF(0) complex. The chain is ATP synthase gamma chain from Bordetella pertussis (strain Tohama I / ATCC BAA-589 / NCTC 13251).